A 364-amino-acid polypeptide reads, in one-letter code: tRNA-specific 2-thiouridylase MnmA (364 aa).

ATP contacts are provided by residues 12-19 (GMSGGVDS) and methionine 38. An interaction with target base in tRNA region spans residues 98–100 (NPD). Cysteine 103 serves as the catalytic Nucleophile. Cysteine 103 and cysteine 199 are disulfide-bonded. Glycine 127 is an ATP binding site. Positions 149–151 (KDQ) are interaction with tRNA. The Cysteine persulfide intermediate role is filled by cysteine 199. Residues 307 to 308 (RY) are interaction with tRNA.

This sequence belongs to the MnmA/TRMU family.

The protein resides in the cytoplasm. It carries out the reaction S-sulfanyl-L-cysteinyl-[protein] + uridine(34) in tRNA + AH2 + ATP = 2-thiouridine(34) in tRNA + L-cysteinyl-[protein] + A + AMP + diphosphate + H(+). In terms of biological role, catalyzes the 2-thiolation of uridine at the wobble position (U34) of tRNA, leading to the formation of s(2)U34. This Shouchella clausii (strain KSM-K16) (Alkalihalobacillus clausii) protein is tRNA-specific 2-thiouridylase MnmA.